We begin with the raw amino-acid sequence, 202 residues long: CASP-like protein 2B1 (202 aa).

Residues 1–29 (MSYLGVGVSPGNVPVYHGTNLKVVDRRVR) are Cytoplasmic-facing. A helical transmembrane segment spans residues 30–50 (LAELVLRCVICGLGILAAVLV). Residues 51 to 72 (GTDTQVKVIFTIQKKAKFTDMK) are Extracellular-facing. The helical transmembrane segment at 73–93 (ALVFLVIANGIAAAYSLIQGL) threads the bilayer. Residues 94-109 (RCVVSMVRGSVLFSKP) are Cytoplasmic-facing. A helical membrane pass occupies residues 110–130 (LAWAIFSGDQVIAYLTLAAVA). Residues 131–164 (AAAQSSVFGEFGQPELQWMKICNMYGKFCNQVGE) lie on the Extracellular side of the membrane. Residues 165-185 (GIVSAVGVSLSMVILSGISAF) form a helical membrane-spanning segment. Over 186–202 (SLFRLYGGNKGTSGGRW) the chain is Cytoplasmic.

It belongs to the Casparian strip membrane proteins (CASP) family. As to quaternary structure, homodimer and heterodimers.

It is found in the cell membrane. In Vitis vinifera (Grape), this protein is CASP-like protein 2B1.